A 132-amino-acid chain; its full sequence is Salivary protein 15 Iper-2 (132 aa).

The signal sequence occupies residues 1–18; it reads MKVVCIIVLFVIVAVNES. 5 N-linked (GlcNAc...) asparagine glycosylation sites follow: N24, N36, N62, N89, and N101. A CD4-binding region spans residues 113-132; that stretch reads GPNGQTCADKSQCVGHIPGC.

Belongs to the salp15 family. In terms of assembly, interacts with host CD4. Interacts with host DC-SIGN (CD209). (Microbial infection) Interacts with Borrelia outer surface protein C (OspC). In terms of tissue distribution, expressed in salivary glands from feeding female ticks. Highly expressed 1 day after start of feeding, and weakly expressed at the initiation of feeding and 4 days after start of feeding.

It is found in the secreted. Functionally, salivary tick protein that downregulates host immune system by binding to both dendritic cells, and CD4(+) T cells. Specifically binds to the CD4 coreceptor on T cells. This interaction prevents the activation of the Src kinase, Lck, and its downstream substrate Zap-70, and results in deficient activation of PLCgamma1, the repression of calcium fluxes triggered by T-cell antigen receptor (TCR) ligation, and a subsequent reduction in interleukin-2 production. This salivary protein also binds to DC-SIGN (CD209) on dendritic cells (DC) and activates the Raf-1 kinase/MEK signaling pathway that results in down-regulating expression of pro-inflammatory cytokines. Furthermore, it inhibits T cell proliferation induced by DCs. It also inhibits in vitro keratinocyte inflammation induced by Borrelia burgdorferi or by the major outer surface protein (OspC) of Borrelia. In addition, it downregulates chemokines and monocyte chemoattractant protein 1, as well as several antimicrobial peptides such as defensins, cathelicidin, psoriasin, and RNase 7. Apart from its immunomodulatory activities, it is also associated with protection of Borrelia spirochetes from antibody-mediated killing through its binding to OspC. In vivo, tests on different immune disease animal models show promising therapeutic results, e.g., in inhibiting HIV infection, experimental autoimmune encephalomyelitis, transplantation rejection, and asthma. In terms of biological role, (Microbial infection) Protects Borrelia garinii from anti-Borrelia antibody-mediated cytotoxicity in vitro. May facilitate B.garinii transmission in mouse model. Its function is as follows. (Microbial infection) Protects Borrelia burgdorferi from anti-Borrelia antibody-mediated cytotoxicity in vitro. (Microbial infection) Protects Borrelia afzelii from anti-Borrelia antibody-mediated cytotoxicity in vitro. The chain is Salivary protein 15 Iper-2 from Ixodes persulcatus (Taiga tick).